Here is a 194-residue protein sequence, read N- to C-terminus: UPF0215 protein PF2042 (194 aa).

Belongs to the UPF0215 family.

The chain is UPF0215 protein PF2042 from Pyrococcus furiosus (strain ATCC 43587 / DSM 3638 / JCM 8422 / Vc1).